Reading from the N-terminus, the 397-residue chain is Cathepsin E (397 aa).

The first 16 residues, 1–16, serve as a signal peptide directing secretion; sequence MKQFLVVLLILSFVHG. Positions 17–49 are cleaved as a propeptide — activation peptide; that stretch reads IIRVPLKRQKSMRKILKEKGKLSHLWTKQGNEF. A Peptidase A1 domain is found at 74–385; it reads YFGQISIGTP…DRGNNRVGFA (312 aa). Asp-92 is an active-site residue. A disulfide bridge links Cys-105 with Cys-110. Asn-139 is a glycosylation site (N-linked (GlcNAc...) asparagine). Cys-268 and Cys-272 form a disulfide bridge. Asp-277 is a catalytic residue. Cysteines 310 and 344 form a disulfide.

The protein belongs to the peptidase A1 family. As to quaternary structure, homodimer; disulfide-linked. Post-translationally, glycosylated. Contains high mannose-type oligosaccharide. As to expression, found in the larval foregut and adult stomach.

It localises to the endosome. It carries out the reaction Similar to cathepsin D, but slightly broader specificity.. May have a role in immune function. Probably involved in the processing of antigenic peptides during MHC class II-mediated antigen presentation. This Aquarana catesbeiana (American bullfrog) protein is Cathepsin E (CTSE).